The primary structure comprises 364 residues: Spermidine/putrescine import ATP-binding protein PotA (364 aa).

The ABC transporter domain maps to 5–235 (LSFKGVTKGF…PVNRFVADFI (231 aa)). An ATP-binding site is contributed by 37–44 (GPSGCGKT).

This sequence belongs to the ABC transporter superfamily. Spermidine/putrescine importer (TC 3.A.1.11.1) family. The complex is composed of two ATP-binding proteins (PotA), two transmembrane proteins (PotB and PotC) and a solute-binding protein (PotD).

The protein localises to the cell membrane. It catalyses the reaction ATP + H2O + polyamine-[polyamine-binding protein]Side 1 = ADP + phosphate + polyamineSide 2 + [polyamine-binding protein]Side 1.. Functionally, part of the ABC transporter complex PotABCD involved in spermidine/putrescine import. Responsible for energy coupling to the transport system. This Staphylococcus haemolyticus (strain JCSC1435) protein is Spermidine/putrescine import ATP-binding protein PotA.